A 575-amino-acid polypeptide reads, in one-letter code: Sclareol synthase, chloroplastic (575 aa).

A chloroplast-targeting transit peptide spans 1 to 51 (MSLAFNVGVTPFSGQRVGSRKEKFPVQGFPVTTPNRSRLIVNCSLTTIDFM). Residues D329, D333, N473, S477, and E481 each coordinate Mg(2+). The DDXXD motif motif lies at 329–333 (DDFFD).

It belongs to the terpene synthase family.

It is found in the plastid. Its subcellular location is the chloroplast. The catalysed reaction is 8-hydroxycopalyl diphosphate + H2O = sclareol + diphosphate. It functions in the pathway secondary metabolite biosynthesis; terpenoid biosynthesis. Its function is as follows. Involved in the biosynthesis of labdane-type diterpenoid including sclareol, a diterpene-diol that is used as fragrance and flavoring, and has anticancer effects (able to kill leukemic and colon cancer cells by apoptosis). Sclareol can also be used as synthesis precursor of ambergris substitution fragance products such as ambrox. Terpene synthase that catalyzes the conversion of 8-hydroxy-copalyl diphosphate to sclareol. In Salvia sclarea (Clary sage), this protein is Sclareol synthase, chloroplastic.